Consider the following 257-residue polypeptide: 5'-nucleotidase SurE (257 aa).

A divalent metal cation is bound by residues aspartate 8, aspartate 9, serine 40, and asparagine 92.

The protein belongs to the SurE nucleotidase family. A divalent metal cation is required as a cofactor.

It localises to the cytoplasm. It carries out the reaction a ribonucleoside 5'-phosphate + H2O = a ribonucleoside + phosphate. Nucleotidase that shows phosphatase activity on nucleoside 5'-monophosphates. The protein is 5'-nucleotidase SurE of Rhizobium rhizogenes (strain K84 / ATCC BAA-868) (Agrobacterium radiobacter).